We begin with the raw amino-acid sequence, 86 residues long: Large ribosomal subunit protein bL27 (86 aa).

The segment covering 1 to 10 (MAQKKGGGST) has biased composition (gly residues). Residues 1–21 (MAQKKGGGSTRNGRDSESKRL) are disordered.

It belongs to the bacterial ribosomal protein bL27 family.

The sequence is that of Large ribosomal subunit protein bL27 from Cupriavidus pinatubonensis (strain JMP 134 / LMG 1197) (Cupriavidus necator (strain JMP 134)).